A 190-amino-acid polypeptide reads, in one-letter code: Probable chorismate pyruvate-lyase (190 aa).

Substrate contacts are provided by R74, L112, and E173.

It belongs to the UbiC family.

It localises to the cytoplasm. It carries out the reaction chorismate = 4-hydroxybenzoate + pyruvate. Its pathway is cofactor biosynthesis; ubiquinone biosynthesis. Removes the pyruvyl group from chorismate, with concomitant aromatization of the ring, to provide 4-hydroxybenzoate (4HB) for the ubiquinone pathway. This Bordetella bronchiseptica (strain ATCC BAA-588 / NCTC 13252 / RB50) (Alcaligenes bronchisepticus) protein is Probable chorismate pyruvate-lyase.